A 453-amino-acid chain; its full sequence is Allantoinase (453 aa).

Residues His-59, His-61, Lys-146, His-186, His-242, and Asp-315 each contribute to the Zn(2+) site. At Lys-146 the chain carries N6-carboxylysine.

The protein belongs to the metallo-dependent hydrolases superfamily. Allantoinase family. Homotetramer. Requires Zn(2+) as cofactor. Post-translationally, carboxylation allows a single lysine to coordinate two zinc ions.

The catalysed reaction is (S)-allantoin + H2O = allantoate + H(+). The protein operates within nitrogen metabolism; (S)-allantoin degradation; allantoate from (S)-allantoin: step 1/1. Catalyzes the conversion of allantoin (5-ureidohydantoin) to allantoic acid by hydrolytic cleavage of the five-member hydantoin ring. The sequence is that of Allantoinase from Salmonella choleraesuis (strain SC-B67).